A 729-amino-acid polypeptide reads, in one-letter code: Fatty acid oxidation complex subunit alpha (729 aa).

Residues 1–189 (MLYKGDTLYL…KIGLVDGVVK (189 aa)) are enoyl-CoA hydratase/isomerase. D296 contributes to the substrate binding site. The interval 311–729 (ETPKQAAVLG…ARPVGDLKTA (419 aa)) is 3-hydroxyacyl-CoA dehydrogenase. Residues M324, D343, 400–402 (VVE), K407, and S429 each bind NAD(+). The active-site For 3-hydroxyacyl-CoA dehydrogenase activity is H450. N453 serves as a coordination point for NAD(+). Residues N500 and Y660 each coordinate substrate. The tract at residues 708-729 (RHNEPYYPPVEPARPVGDLKTA) is disordered.

The protein in the N-terminal section; belongs to the enoyl-CoA hydratase/isomerase family. This sequence in the C-terminal section; belongs to the 3-hydroxyacyl-CoA dehydrogenase family. As to quaternary structure, heterotetramer of two alpha chains (FadB) and two beta chains (FadA).

It carries out the reaction a (3S)-3-hydroxyacyl-CoA + NAD(+) = a 3-oxoacyl-CoA + NADH + H(+). It catalyses the reaction a (3S)-3-hydroxyacyl-CoA = a (2E)-enoyl-CoA + H2O. The enzyme catalyses a 4-saturated-(3S)-3-hydroxyacyl-CoA = a (3E)-enoyl-CoA + H2O. The catalysed reaction is (3S)-3-hydroxybutanoyl-CoA = (3R)-3-hydroxybutanoyl-CoA. It carries out the reaction a (3Z)-enoyl-CoA = a 4-saturated (2E)-enoyl-CoA. It catalyses the reaction a (3E)-enoyl-CoA = a 4-saturated (2E)-enoyl-CoA. Its pathway is lipid metabolism; fatty acid beta-oxidation. In terms of biological role, involved in the aerobic and anaerobic degradation of long-chain fatty acids via beta-oxidation cycle. Catalyzes the formation of 3-oxoacyl-CoA from enoyl-CoA via L-3-hydroxyacyl-CoA. It can also use D-3-hydroxyacyl-CoA and cis-3-enoyl-CoA as substrate. The sequence is that of Fatty acid oxidation complex subunit alpha from Escherichia coli O139:H28 (strain E24377A / ETEC).